Reading from the N-terminus, the 308-residue chain is Glucan 1,3-beta-glucosidase BGL2 (308 aa).

An N-terminal signal peptide occupies residues 1–18 (MQIKFLTTLATVLTSVAA). E119 serves as the catalytic Proton donor. N-linked (GlcNAc...) asparagine glycosylation is present at N197. Catalysis depends on E228, which acts as the Nucleophile.

This sequence belongs to the glycosyl hydrolase 17 family.

The protein resides in the secreted. The protein localises to the cell wall. Its subcellular location is the cytoplasm. It catalyses the reaction Successive hydrolysis of beta-D-glucose units from the non-reducing ends of (1-&gt;3)-beta-D-glucans, releasing alpha-glucose.. Its function is as follows. Cell wall glucan 1,3-beta-glucosidase involved in cell wall biosynthesis and virulence. Crucial for delivery of beta-1,3-glucan to the biofilm matrix and for accumulation of mature matrix biomass. Plays a role as a major antigen in human systemic candidiasis patients. The polypeptide is Glucan 1,3-beta-glucosidase BGL2 (BGL2) (Candida albicans (strain SC5314 / ATCC MYA-2876) (Yeast)).